The primary structure comprises 283 residues: Acetyl-coenzyme A carboxylase carboxyl transferase subunit beta (283 aa).

In terms of domain architecture, CoA carboxyltransferase N-terminal spans 29–283 (LWISCPKCQQ…VKIHSMKGAF (255 aa)). 4 residues coordinate Zn(2+): cysteine 33, cysteine 36, cysteine 51, and cysteine 54. The segment at 33–54 (CPKCQQSIYHKDLGKYKTCPNC) adopts a C4-type zinc-finger fold.

The protein belongs to the AccD/PCCB family. As to quaternary structure, acetyl-CoA carboxylase is a heterohexamer composed of biotin carboxyl carrier protein (AccB), biotin carboxylase (AccC) and two subunits each of ACCase subunit alpha (AccA) and ACCase subunit beta (AccD). It depends on Zn(2+) as a cofactor.

It localises to the cytoplasm. It carries out the reaction N(6)-carboxybiotinyl-L-lysyl-[protein] + acetyl-CoA = N(6)-biotinyl-L-lysyl-[protein] + malonyl-CoA. The protein operates within lipid metabolism; malonyl-CoA biosynthesis; malonyl-CoA from acetyl-CoA: step 1/1. Functionally, component of the acetyl coenzyme A carboxylase (ACC) complex. Biotin carboxylase (BC) catalyzes the carboxylation of biotin on its carrier protein (BCCP) and then the CO(2) group is transferred by the transcarboxylase to acetyl-CoA to form malonyl-CoA. The polypeptide is Acetyl-coenzyme A carboxylase carboxyl transferase subunit beta (Ligilactobacillus salivarius (strain UCC118) (Lactobacillus salivarius)).